Reading from the N-terminus, the 655-residue chain is Carboxypeptidase S1 homolog B (655 aa).

Residues 1 to 21 (MRPFARAALCLLAAAGHLAQA) form the signal peptide. Cysteine 51 and cysteine 123 are oxidised to a cystine. N-linked (GlcNAc...) asparagine glycosylation is found at asparagine 130, asparagine 163, and asparagine 186. The active site involves serine 240. Residues asparagine 266, asparagine 302, and asparagine 311 are each glycosylated (N-linked (GlcNAc...) asparagine). 2 cysteine pairs are disulfide-bonded: cysteine 328-cysteine 364 and cysteine 335-cysteine 357. The N-linked (GlcNAc...) asparagine glycan is linked to asparagine 414. Residue aspartate 459 is part of the active site. Cysteine 462 is a binding site for substrate. 3 N-linked (GlcNAc...) asparagine glycosylation sites follow: asparagine 475, asparagine 493, and asparagine 506. Histidine 517 is a catalytic residue. Glutamate 518 serves as a coordination point for substrate. Residues asparagine 598 and asparagine 612 are each glycosylated (N-linked (GlcNAc...) asparagine). Glycine 631 carries the GPI-anchor amidated glycine lipid modification. Residues 632–655 (AALVSGRIKFHVHVIKSFDYYIFI) constitute a propeptide, removed in mature form.

Belongs to the peptidase S10 family.

It localises to the cell membrane. The catalysed reaction is Preferential release of a C-terminal arginine or lysine residue.. Extracellular serine carboxypeptidase that contributes to pathogenicity. This chain is Carboxypeptidase S1 homolog B (SCPB), found in Arthroderma otae (strain ATCC MYA-4605 / CBS 113480) (Microsporum canis).